The following is a 352-amino-acid chain: Protein RecA (352 aa).

An ATP-binding site is contributed by 67–74; the sequence is GPESSGKT.

It belongs to the RecA family.

The protein resides in the cytoplasm. Can catalyze the hydrolysis of ATP in the presence of single-stranded DNA, the ATP-dependent uptake of single-stranded DNA by duplex DNA, and the ATP-dependent hybridization of homologous single-stranded DNAs. It interacts with LexA causing its activation and leading to its autocatalytic cleavage. This Enterobacter sp. (strain 638) protein is Protein RecA.